We begin with the raw amino-acid sequence, 358 residues long: Peptide chain release factor 1 (358 aa).

Glutamine 232 carries the N5-methylglutamine modification.

This sequence belongs to the prokaryotic/mitochondrial release factor family. Methylated by PrmC. Methylation increases the termination efficiency of RF1.

It is found in the cytoplasm. In terms of biological role, peptide chain release factor 1 directs the termination of translation in response to the peptide chain termination codons UAG and UAA. The polypeptide is Peptide chain release factor 1 (Acidobacterium capsulatum (strain ATCC 51196 / DSM 11244 / BCRC 80197 / JCM 7670 / NBRC 15755 / NCIMB 13165 / 161)).